A 418-amino-acid polypeptide reads, in one-letter code: Light-independent protochlorophyllide reductase subunit N (418 aa).

[4Fe-4S] cluster-binding residues include C17, C42, and C103.

This sequence belongs to the BchN/ChlN family. As to quaternary structure, protochlorophyllide reductase is composed of three subunits; ChlL, ChlN and ChlB. Forms a heterotetramer of two ChlB and two ChlN subunits. The cofactor is [4Fe-4S] cluster.

It carries out the reaction chlorophyllide a + oxidized 2[4Fe-4S]-[ferredoxin] + 2 ADP + 2 phosphate = protochlorophyllide a + reduced 2[4Fe-4S]-[ferredoxin] + 2 ATP + 2 H2O. Its pathway is porphyrin-containing compound metabolism; chlorophyll biosynthesis (light-independent). In terms of biological role, component of the dark-operative protochlorophyllide reductase (DPOR) that uses Mg-ATP and reduced ferredoxin to reduce ring D of protochlorophyllide (Pchlide) to form chlorophyllide a (Chlide). This reaction is light-independent. The NB-protein (ChlN-ChlB) is the catalytic component of the complex. In Prochlorococcus marinus (strain MIT 9515), this protein is Light-independent protochlorophyllide reductase subunit N.